A 463-amino-acid polypeptide reads, in one-letter code: Interleukin enhancer-binding factor 2 (463 aa).

Position 94 is an asymmetric dimethylarginine; alternate (arginine 94). Arginine 94 is modified (omega-N-methylarginine; alternate). A DZF domain is found at 108–444 (RHILAYDWLA…PEKKEGEEEE (337 aa)). Arginine 145 is modified (omega-N-methylarginine). A Glycyl lysine isopeptide (Lys-Gly) (interchain with G-Cter in ubiquitin) cross-link involves residue lysine 166. A phosphoserine mark is found at serine 173 and serine 189. Residues lysine 259 and lysine 437 each participate in a glycyl lysine isopeptide (Lys-Gly) (interchain with G-Cter in SUMO2) cross-link. A disordered region spans residues 424 to 463 (VTPSEKAYEKPPEKKEGEEEEENTEEPPQGEEEESMETQE). A compositionally biased stretch (basic and acidic residues) spans 429-440 (KAYEKPPEKKEG). Residues 441–463 (EEEEENTEEPPQGEEEESMETQE) show a composition bias toward acidic residues. Threonine 461 carries the phosphothreonine modification.

In terms of assembly, forms heterodimers with ILF3. ILF2-ILF3 heterodimers may also bind to PRKDC/XRCC7: this may stabilize the interaction of PRKDC/XRCC7 and the heterodimeric complex of G22P1/KU70 and XRCC5/KU80. Forms a complex with ILF3, YLPM1, KHDRBS1, RBMX, NCOA5 and PPP1CA. Identified in a IGF2BP1-dependent mRNP granule complex containing untranslated mRNAs. Interacts with IGF2BP1. Interacts with CRBN; this interaction promotes ubiquitination and subsequent degradation of ILF2. Post-translationally, ubiquitinated at Lys-166 by CRBN with polyubiquitin chains by the CUL4-RING E3 ligase (CRL4-CRBN) and then degraded by the proteasome.

The protein localises to the nucleus. It is found in the nucleolus. The protein resides in the cytoplasm. Its function is as follows. Chromatin-interacting protein that forms a stable heterodimer with interleukin enhancer-binding factor 3/ILF3 and plays a role in several biological processes including transcription, innate immunity or cell growth. Essential for the efficient reshuttling of ILF3 (isoform 1 and isoform 2) into the nucleus. Together with ILF3, forms an RNA-binding complex that is required for mitotic progression and cytokinesis by regulating the expression of a cluster of mitotic genes. Mechanistically, competes with STAU1/STAU2-mediated mRNA decay. Plays also a role in the inhibition of various viruses including Japanese encephalitis virus or enterovirus 71. In Rattus norvegicus (Rat), this protein is Interleukin enhancer-binding factor 2 (Ilf2).